Consider the following 195-residue polypeptide: MDFQVVIFILCYFIGSIPFGFILSYVTGIGDIRKTGSGNIGATNVFRKNKKLALLTLLLDALKSFICVAIAQKYNIDNTILFLAALFAIIGHMFPVYLFFKGGKGVAPLLGSLIFIDYKVALCFLTFWIICFLLCKYASLSSIVSTLIALLFICTYYTIVQSVIFAITALLIITQHTDNIIRMLNKSENKINLKL.

5 helical membrane-spanning segments follow: residues 3–23 (FQVVIFILCYFIGSIPFGFIL), 52–72 (LALLTLLLDALKSFICVAIAQ), 80–100 (ILFLAALFAIIGHMFPVYLFF), 113–133 (LIFIDYKVALCFLTFWIICFL), and 147–167 (LIALLFICTYYTIVQSVIFAI).

It belongs to the PlsY family. In terms of assembly, probably interacts with PlsX.

The protein resides in the cell inner membrane. It catalyses the reaction an acyl phosphate + sn-glycerol 3-phosphate = a 1-acyl-sn-glycero-3-phosphate + phosphate. It participates in lipid metabolism; phospholipid metabolism. Catalyzes the transfer of an acyl group from acyl-phosphate (acyl-PO(4)) to glycerol-3-phosphate (G3P) to form lysophosphatidic acid (LPA). This enzyme utilizes acyl-phosphate as fatty acyl donor, but not acyl-CoA or acyl-ACP. In Ehrlichia ruminantium (strain Gardel), this protein is Glycerol-3-phosphate acyltransferase.